The primary structure comprises 75 residues: Tetrahydromethanopterin S-methyltransferase subunit F (75 aa).

A helical transmembrane segment spans residues 53-73; it reads FAGLACGMVFAGVLLVPLLLL.

The protein belongs to the MtrF family. As to quaternary structure, the complex is composed of 8 subunits; MtrA, MtrB, MtrC, MtrD, MtrE, MtrF, MtrG and MtrH.

Its subcellular location is the cell membrane. The catalysed reaction is 5-methyl-5,6,7,8-tetrahydromethanopterin + coenzyme M + 2 Na(+)(in) = 5,6,7,8-tetrahydromethanopterin + methyl-coenzyme M + 2 Na(+)(out). It functions in the pathway one-carbon metabolism; methanogenesis from CO(2); methyl-coenzyme M from 5,10-methylene-5,6,7,8-tetrahydromethanopterin: step 2/2. Functionally, part of a complex that catalyzes the formation of methyl-coenzyme M and tetrahydromethanopterin from coenzyme M and methyl-tetrahydromethanopterin. This is an energy-conserving, sodium-ion translocating step. The polypeptide is Tetrahydromethanopterin S-methyltransferase subunit F (Methanopyrus kandleri (strain AV19 / DSM 6324 / JCM 9639 / NBRC 100938)).